A 397-amino-acid polypeptide reads, in one-letter code: Thioredoxin-interacting protein (397 aa).

A Glycyl lysine isopeptide (Lys-Gly) (interchain with G-Cter in ubiquitin) cross-link involves residue Lys-213. Ser-362 bears the Phosphoserine mark.

It belongs to the arrestin family. As to quaternary structure, homodimer; disulfide-linked. Interacts with TXN/thioredoxin through its redox-active site. Interacts with transcriptional repressors ZBTB16, ZBTB32 and HDAC1. Interacts with DDIT4. In terms of processing, ubiquitinated; undergoes heterotypic 'Lys-48'-/'Lys-63'-branched polyubiquitination catalyzed by ITCH and UBR5 resulting in proteasomal degradation. Deubiquitinated by USP5, leading to TXNIP stabilization. As to expression, ubiquitously expressed.

It localises to the cytoplasm. May act as an oxidative stress mediator by inhibiting thioredoxin activity or by limiting its bioavailability. Interacts with COPS5 and restores COPS5-induced suppression of CDKN1B stability, blocking the COPS5-mediated translocation of CDKN1B from the nucleus to the cytoplasm. Functions as a transcriptional repressor, possibly by acting as a bridge molecule between transcription factors and corepressor complexes, and over-expression will induce G0/G1 cell cycle arrest. Required for the maturation of natural killer cells. Acts as a suppressor of tumor cell growth. Inhibits the proteasomal degradation of DDIT4, and thereby contributes to the inhibition of the mammalian target of rapamycin complex 1 (mTORC1). The polypeptide is Thioredoxin-interacting protein (Txnip) (Mus musculus (Mouse)).